A 672-amino-acid chain; its full sequence is tRNA 5-methylaminomethyl-2-thiouridine biosynthesis bifunctional protein MnmC (672 aa).

Positions 1 to 243 (MTSITHAELG…KREMIAGCME (243 aa)) are tRNA (mnm(5)s(2)U34)-methyltransferase. An FAD-dependent cmnm(5)s(2)U34 oxidoreductase region spans residues 269–672 (IGGGIASAAL…LRKGKAITEL (404 aa)).

In the N-terminal section; belongs to the methyltransferase superfamily. tRNA (mnm(5)s(2)U34)-methyltransferase family. It in the C-terminal section; belongs to the DAO family. Requires FAD as cofactor.

Its subcellular location is the cytoplasm. The enzyme catalyses 5-aminomethyl-2-thiouridine(34) in tRNA + S-adenosyl-L-methionine = 5-methylaminomethyl-2-thiouridine(34) in tRNA + S-adenosyl-L-homocysteine + H(+). Functionally, catalyzes the last two steps in the biosynthesis of 5-methylaminomethyl-2-thiouridine (mnm(5)s(2)U) at the wobble position (U34) in tRNA. Catalyzes the FAD-dependent demodification of cmnm(5)s(2)U34 to nm(5)s(2)U34, followed by the transfer of a methyl group from S-adenosyl-L-methionine to nm(5)s(2)U34, to form mnm(5)s(2)U34. The chain is tRNA 5-methylaminomethyl-2-thiouridine biosynthesis bifunctional protein MnmC from Vibrio vulnificus (strain CMCP6).